Consider the following 241-residue polypeptide: MSLTLLPAVDVRDGKAVRLRQGESGSETDYGSPFEAARTWVEAGAEWIHLVDLDAAFGTGNNRDQLREIVHELGDRVNIELSGGVRDDASLDAALEAGAARVNIGTAALENPDWTASVIKKYGDRVAVGLDVRGHTLAARGWTREGGDLFETMKFLDSVGCSRYVVTDVAKDGMMSGPNIQLLREVAERTDAKVTASGGISKLDDLRAIKELAEIGVDSAILGKSLYARAFTLQEALAVAK.

D10 (proton acceptor) is an active-site residue. D131 serves as the catalytic Proton donor.

The protein belongs to the HisA/HisF family.

It is found in the cytoplasm. It carries out the reaction 1-(5-phospho-beta-D-ribosyl)-5-[(5-phospho-beta-D-ribosylamino)methylideneamino]imidazole-4-carboxamide = 5-[(5-phospho-1-deoxy-D-ribulos-1-ylimino)methylamino]-1-(5-phospho-beta-D-ribosyl)imidazole-4-carboxamide. It functions in the pathway amino-acid biosynthesis; L-histidine biosynthesis; L-histidine from 5-phospho-alpha-D-ribose 1-diphosphate: step 4/9. The polypeptide is 1-(5-phosphoribosyl)-5-[(5-phosphoribosylamino)methylideneamino] imidazole-4-carboxamide isomerase (Bifidobacterium longum subsp. infantis (strain ATCC 15697 / DSM 20088 / JCM 1222 / NCTC 11817 / S12)).